Consider the following 226-residue polypeptide: Biosynthetic peptidoglycan transglycosylase (226 aa).

Residues 8–28 (FFGWTWFVMWRFLLLLALLLL) traverse the membrane as a helical segment.

The protein belongs to the glycosyltransferase 51 family.

It is found in the cell inner membrane. It catalyses the reaction [GlcNAc-(1-&gt;4)-Mur2Ac(oyl-L-Ala-gamma-D-Glu-L-Lys-D-Ala-D-Ala)](n)-di-trans,octa-cis-undecaprenyl diphosphate + beta-D-GlcNAc-(1-&gt;4)-Mur2Ac(oyl-L-Ala-gamma-D-Glu-L-Lys-D-Ala-D-Ala)-di-trans,octa-cis-undecaprenyl diphosphate = [GlcNAc-(1-&gt;4)-Mur2Ac(oyl-L-Ala-gamma-D-Glu-L-Lys-D-Ala-D-Ala)](n+1)-di-trans,octa-cis-undecaprenyl diphosphate + di-trans,octa-cis-undecaprenyl diphosphate + H(+). It participates in cell wall biogenesis; peptidoglycan biosynthesis. Its function is as follows. Peptidoglycan polymerase that catalyzes glycan chain elongation from lipid-linked precursors. The polypeptide is Biosynthetic peptidoglycan transglycosylase (Shewanella frigidimarina (strain NCIMB 400)).